The chain runs to 203 residues: Small ribosomal subunit protein uS4 (203 aa).

Residues R93–K153 form the S4 RNA-binding domain.

Belongs to the universal ribosomal protein uS4 family. In terms of assembly, part of the 30S ribosomal subunit. Contacts protein S5. The interaction surface between S4 and S5 is involved in control of translational fidelity.

Functionally, one of the primary rRNA binding proteins, it binds directly to 16S rRNA where it nucleates assembly of the body of the 30S subunit. Its function is as follows. With S5 and S12 plays an important role in translational accuracy. The protein is Small ribosomal subunit protein uS4 of Lactobacillus gasseri (strain ATCC 33323 / DSM 20243 / BCRC 14619 / CIP 102991 / JCM 1131 / KCTC 3163 / NCIMB 11718 / NCTC 13722 / AM63).